The primary structure comprises 384 residues: MRVIGLMSGTSYDAIDAAAADLGLAGDRLVLKPLGLMSEAYDSGLREELAAALPPAATSLAGVCRLDTRIGQAFAAAAVRADRELCGGRAELVASHGQTVYHWAEAGRVYGTLQLGQPAWIAEATGLPVVADFRPRDIAAGGQGAPLVSLVDLLWLRGRAGTSVALNLGGIANLTAPDGTAFDTGPACALIDAAAHGLSGGRLDHDVDGALAARGTVHEPMLRRLLAEPYYALPAPKTTGKELFHLGYLRDALAGFGTLTAEDVIATLTRLTALTVADAVRAVRATEVVASGGGTRNPVLMEMLARELGAVALRTSDELGLPSAAKEAYAFAVLGFLTVHGLAGTDPVSTGARHPSVLGSVTPGRDGLRLPPRADWSPVRLVLE.

Residue 9 to 16 coordinates ATP; sequence GTSYDAID.

Belongs to the anhydro-N-acetylmuramic acid kinase family.

The enzyme catalyses 1,6-anhydro-N-acetyl-beta-muramate + ATP + H2O = N-acetyl-D-muramate 6-phosphate + ADP + H(+). The protein operates within amino-sugar metabolism; 1,6-anhydro-N-acetylmuramate degradation. It participates in cell wall biogenesis; peptidoglycan recycling. Functionally, catalyzes the specific phosphorylation of 1,6-anhydro-N-acetylmuramic acid (anhMurNAc) with the simultaneous cleavage of the 1,6-anhydro ring, generating MurNAc-6-P. Is required for the utilization of anhMurNAc either imported from the medium or derived from its own cell wall murein, and thus plays a role in cell wall recycling. This Streptomyces avermitilis (strain ATCC 31267 / DSM 46492 / JCM 5070 / NBRC 14893 / NCIMB 12804 / NRRL 8165 / MA-4680) protein is Anhydro-N-acetylmuramic acid kinase.